The sequence spans 681 residues: Terpene synthase 6, chloroplastic (681 aa).

4 residues coordinate Mg(2+): Asp433, Asp437, Asn577, and Glu585. The DDXXD motif signature appears at 433-437 (DDLFD).

The protein belongs to the terpene synthase family. Mg(2+) is required as a cofactor. Expressed in leaves.

It localises to the plastid. The protein localises to the chloroplast. The protein operates within secondary metabolite biosynthesis; terpenoid biosynthesis. Functionally, may be involved in the biosynthesis of ent-kaurene diterpenoids natural products such as oridonin, miltiradiene, eriocalyxin B and nezukol, known to exhibit antitumor, anti-inflammatory and antibacterial activities. This chain is Terpene synthase 6, chloroplastic, found in Isodon rubescens (Rabdosia rubescens).